Reading from the N-terminus, the 588-residue chain is Complement component C8 beta chain (588 aa).

The first 30 residues, 1–30, serve as a signal peptide directing secretion; the sequence is MFRVAIPRSALNLHSCLLHVTLSLVLISKA. Residues 31 to 46 constitute a propeptide that is removed on maturation; that stretch reads AITTAGNEDSDVREAR. The TSP type-1 1 domain occupies 58 to 113; the sequence is DCVISDWSAWSRCDTCQKKRYRYAKLDQPSQFGGEPCHFHDMEDEACDVPDRYTCD. Intrachain disulfides connect Cys59/Cys94, Cys70/Cys104, Cys73/Cys112, Cys118/Cys129, Cys123/Cys142, Cys136/Cys151, and Cys158/Cys196. Trp64 and Trp67 each carry a C-linked (Man) tryptophan glycan. Residues 115 to 152 form the LDL-receptor class A domain; that stretch reads IPLCEGFLCTQTGRCIHRTLQCNGEDDCGDMSDEVGCK. Ca(2+) contacts are provided by Leu134, Asn137, Glu139, Asp141, Asp147, and Glu148. Positions 154–500 constitute an MACPF domain; the sequence is VPKPCRQEAE…EYLAESSSCR (347 aa). 4 beta stranded membrane-spanning segments follow: residues 248–255, 258–265, 375–382, and 388–395; these read TIVSIGFA, GIAEFGFN, TQAGLKIG, and VYVSAGIE. Disulfide bonds link Cys374-Cys399, Cys499-Cys547, Cys501-Cys517, Cys504-Cys519, and Cys521-Cys530. An EGF-like domain is found at 501 to 531; sequence CAPCHNNGVAVLRGTRCDCVCPTGYTGRGCE. The TSP type-1 2 domain maps to 542 to 588; sequence DGSWSCWGAWSSCSGRKMSRSRQCNNPVPSDGGLACRGLQQESTDCF. Trp548 and Trp551 each carry a C-linked (Man) tryptophan glycan. An intrachain disulfide couples Cys554 to Cys587.

It belongs to the complement C6/C7/C8/C9 family. As to quaternary structure, heterotrimer of 3 chains: alpha (C8A), beta (C8B) and gamma (C8G); the alpha and gamma chains are disulfide bonded. Component of the membrane attack complex (MAC), composed of complement C5b, C6, C7, C8A, C8B, C8G and multiple copies of the pore-forming subunit C9.

The protein localises to the secreted. It localises to the target cell membrane. Functionally, component of the membrane attack complex (MAC), a multiprotein complex activated by the complement cascade, which inserts into a target cell membrane and forms a pore, leading to target cell membrane rupture and cell lysis. The MAC is initiated by proteolytic cleavage of C5 into complement C5b in response to the classical, alternative, lectin and GZMK complement pathways. The complement pathways consist in a cascade of proteins that leads to phagocytosis and breakdown of pathogens and signaling that strengthens the adaptive immune system. C8B, together with C8A and C8G, inserts into the target membrane, but does not form pores by itself. During MAC assembly, associates with C5b, C6 and C7 to form the C5b8 intermediate complex that inserts into the target membrane and traverses the bilayer increasing membrane rigidity. In Paralichthys olivaceus (Bastard halibut), this protein is Complement component C8 beta chain (c8b).